The following is a 77-amino-acid chain: Short neurotoxin OH-32 (77 aa).

Residues 1-21 form the signal peptide; that stretch reads MKNLLLTFLVVTIVCLDLGYT. 4 disulfides stabilise this stretch: Cys-24–Cys-40, Cys-33–Cys-58, Cys-62–Cys-70, and Cys-71–Cys-76.

The protein belongs to the three-finger toxin family. Short-chain subfamily. In terms of tissue distribution, expressed by the venom gland.

The protein localises to the secreted. This three-finger toxin binds and inhibits the nicotinic acetylcholine receptor (nAChR). The chain is Short neurotoxin OH-32 from Ophiophagus hannah (King cobra).